The sequence spans 1140 residues: Envelopment polyprotein (1140 aa).

Residues 1 to 17 (MVGWVCISLVVLATTTA) form the signal peptide. Over 18–489 (GLTRNLYELK…VPGLHGWATT (472 aa)) the chain is Lumenal. Disulfide bonds link Cys30–Cys155, Cys64–Cys161, Cys113–Cys132, Cys137–Cys142, Cys179–Cys189, and Cys214–Cys251. Asn138 is a glycosylation site (N-linked (GlcNAc...) asparagine; by host). A glycan (N-linked (GlcNAc...) asparagine; by host) is linked at Asn351. Disulfide bonds link Cys380–Cys439, Cys384–Cys393, Cys409–Cys428, and Cys456–Cys479. Asn403 is a glycosylation site (N-linked (GlcNAc...) asparagine; by host). The helical transmembrane segment at 490–510 (ALLITFCFGWLLIPTITMIIL) threads the bilayer. Topologically, residues 511 to 631 (KILRLLTFSC…LGVFRYKSRC (121 aa)) are cytoplasmic. The tract at residues 520–537 (CSHYSTESKFKAILERVK) is binding to the ribonucleoprotein. 2 CCHC-type zinc fingers span residues 549–569 (CDVCHHECETAKELETHKKSC) and 574–595 (CPYCMTMTESTESALQAHFSIC). Binding to the ribonucleoprotein stretches follow at residues 592-609 (FSICKLTNRFQENLKKSL), 596-607 (KLTNRFQENLKK), and 615-629 (KQGCYRTLGVFRYKS). An interaction with host TRAF3 region spans residues 611-638 (RPEVKQGCYRTLGVFRYKSRCYVGLVWG). In terms of domain architecture, ITAM spans 615–638 (KQGCYRTLGVFRYKSRCYVGLVWG). Phosphotyrosine; by host is present on residues Tyr619 and Tyr632. Positions 619–622 (YRTL) match the YxxL motif. The helical transmembrane segment at 632–652 (YVGLVWGVLLTTELIVWAASA) threads the bilayer. Topologically, residues 653-1108 (DTPLMESGWS…EWLLGILNGN (456 aa)) are lumenal. 8 disulfide bridges follow: Cys739–Cys774, Cys743–Cys781, Cys755–Cys888, Cys769–Cys899, Cys784–Cys907, Cys810–Cys819, Cys827–Cys836, and Cys867–Cys871. The interval 761–781 (YQYETSWGCNPPDCPGVGTGC) is fusion loop. Asn931 is a glycosylation site (N-linked (GlcNAc...) asparagine; by host). Disulfide bonds link Cys973-Cys1003, Cys996-Cys1048, Cys1013-Cys1018, Cys1049-Cys1054, and Cys1088-Cys1092. Residues 1109–1129 (WVVVAVLIVILILSILLFSFF) form a helical membrane-spanning segment. The interval 1125-1140 (LFSFFCPIRGRKNKSN) is binding to the ribonucleoprotein. At 1130–1140 (CPIRGRKNKSN) the chain is on the cytoplasmic side.

It belongs to the hantavirus envelope glycoprotein family. As to quaternary structure, homodimer. Homotetramer; forms heterotetrameric Gn-Gc spikes in the pre-fusion conformation. Interacts (via C-terminus) with the nucleoprotein. Interacts with host TUFM; this interaction contributes to the virus-induced degradation of mitochondria by autophagy, which leads to degradation of host MAVS and inhibition of type I interferon (IFN) responses. Interacts with host MAP1LC3B; this interaction contributes to the virus-induced degradation of mitochondria by autophagy, which leads to degradation of host MAVS and inhibition of type I interferon (IFN) responses. Interacts (via C-terminus) with host TRAF3 (via N-terminus); this interaction inhibits the formation of TRAF3-TBK1 complexes. In terms of assembly, homodimer. Homotetramer; forms heterotetrameric Gn-Gc spikes in the pre-fusion conformation. Homotrimer; forms homotrimer in the post-fusion conformation at acidic pH. Interacts (via C-terminus) with the nucleoprotein. In terms of processing, envelope polyprotein precursor is quickly cleaved in vivo just after synthesis, presumably by host signal peptidase.

It is found in the virion membrane. It localises to the host cell surface. The protein resides in the host Golgi apparatus membrane. Its subcellular location is the host endoplasmic reticulum membrane. The protein localises to the host mitochondrion. Its function is as follows. Forms homotetramers with glycoprotein C at the surface of the virion. Attaches the virion to host cell receptors including integrin ITGAV/ITGB3. This attachment induces virion internalization predominantly through clathrin-dependent endocytosis. Mediates the assembly and budding of infectious virus particles through its interaction with the nucleocapsid protein and the viral genome. May dysregulate normal immune and endothelial cell responses through an ITAM motif. Translocates to mitochondria, binds to host TUFM and recruits MAP1LC3B. These interactions induce mitochondrial autophagy and therefore destruction of host MAVS leading to inhibition of type I interferon (IFN) responses. Concomitant breakdown of glycoprotein N is apparently prevented by the nucleoprotein that may inhibit Gn-stimulated autophagosome-lysosome fusion. Interacts with the viral genomic RNA. Inhibits the host RIG-I/TBK1 pathway by disrupting the formation of TBK1-TRAF3 complexes and downstream signaling responses required for IFN-beta transcription. Forms homotetramers with glycoprotein N at the surface of the virion. Attaches the virion to host cell receptors including integrin ITGAV/ITGB3. This attachment induces virion internalization predominantly through clathrin-dependent endocytosis. Class II fusion protein that promotes fusion of viral membrane with host endosomal membrane after endocytosis of the virion. This is Envelopment polyprotein (GP) from Homo sapiens (Human).